The sequence spans 156 residues: Transcription antitermination protein NusB (156 aa).

Belongs to the NusB family.

Its function is as follows. Involved in transcription antitermination. Required for transcription of ribosomal RNA (rRNA) genes. Binds specifically to the boxA antiterminator sequence of the ribosomal RNA (rrn) operons. The polypeptide is Transcription antitermination protein NusB (Rickettsia rickettsii (strain Iowa)).